The following is a 482-amino-acid chain: Cardiolipin synthase (482 aa).

The next 2 membrane-spanning stretches (helical) occupy residues 4–24 (LAYL…VTVF) and 34–54 (WAWL…YLIF). 2 consecutive PLD phosphodiesterase domains span residues 217–244 (LNYR…GDEY) and 395–422 (DNGF…DFRS). Residues histidine 222, lysine 224, aspartate 229, histidine 400, lysine 402, and aspartate 407 contribute to the active site.

The protein belongs to the phospholipase D family. Cardiolipin synthase subfamily.

The protein localises to the cell membrane. The enzyme catalyses 2 a 1,2-diacyl-sn-glycero-3-phospho-(1'-sn-glycerol) = a cardiolipin + glycerol. Functionally, catalyzes the reversible phosphatidyl group transfer from one phosphatidylglycerol molecule to another to form cardiolipin (CL) (diphosphatidylglycerol) and glycerol. This chain is Cardiolipin synthase (cls), found in Listeria monocytogenes serotype 4b (strain CLIP80459).